Reading from the N-terminus, the 163-residue chain is MQTAYFSGGCFWCVEAIFQRIVGIIKLTSGYCNGNTSNPTYQDICLGVTGHAEVVKIEFDEFKISFKVLLDIFFEIHNPTTLNQQGNDRGTQYRSAIFYINNKQQLQAINMINLMSDNIVTQVTKLDCFYPAEDYHQNYFNNNLSKPYCQMLIRPKLDKYFSQ.

Residue Cys-10 is part of the active site.

This sequence belongs to the MsrA Met sulfoxide reductase family.

It catalyses the reaction L-methionyl-[protein] + [thioredoxin]-disulfide + H2O = L-methionyl-(S)-S-oxide-[protein] + [thioredoxin]-dithiol. It carries out the reaction [thioredoxin]-disulfide + L-methionine + H2O = L-methionine (S)-S-oxide + [thioredoxin]-dithiol. Its function is as follows. Has an important function as a repair enzyme for proteins that have been inactivated by oxidation. Catalyzes the reversible oxidation-reduction of methionine sulfoxide in proteins to methionine. This chain is Peptide methionine sulfoxide reductase MsrA, found in Vesicomyosocius okutanii subsp. Calyptogena okutanii (strain HA).